Here is a 346-residue protein sequence, read N- to C-terminus: N-acetyl-gamma-glutamyl-phosphate reductase (346 aa).

Residue cysteine 150 is part of the active site.

The protein belongs to the NAGSA dehydrogenase family. Type 1 subfamily.

It is found in the cytoplasm. The enzyme catalyses N-acetyl-L-glutamate 5-semialdehyde + phosphate + NADP(+) = N-acetyl-L-glutamyl 5-phosphate + NADPH + H(+). Its pathway is amino-acid biosynthesis; L-arginine biosynthesis; N(2)-acetyl-L-ornithine from L-glutamate: step 3/4. Its function is as follows. Catalyzes the NADPH-dependent reduction of N-acetyl-5-glutamyl phosphate to yield N-acetyl-L-glutamate 5-semialdehyde. The sequence is that of N-acetyl-gamma-glutamyl-phosphate reductase from Acetivibrio thermocellus (strain ATCC 27405 / DSM 1237 / JCM 9322 / NBRC 103400 / NCIMB 10682 / NRRL B-4536 / VPI 7372) (Clostridium thermocellum).